We begin with the raw amino-acid sequence, 382 residues long: Myb-like transcription factor (382 aa).

3 consecutive Myb-like domains span residues Met-1–Lys-57, Ile-58–Leu-108, and Asp-109–Phe-160. Positions Met-194 to Thr-210 are enriched in acidic residues. The interval Met-194–Thr-240 is disordered. Positions Pro-211 to Thr-240 are enriched in polar residues.

The protein localises to the nucleus. Transcription factor; part of the gene cluster that mediates the biosynthesis of 1233A, a natural compound known as an inhibitor of HMG-CoA synthase in the mevalonate pathway and with antibacterial and antifungal activities. Involved in hygromycin B-induced transcriptional control of the cluster. This Fusarium sp protein is Myb-like transcription factor.